The sequence spans 84 residues: PAMP-induced secreted peptide 2 (84 aa).

Residues 1-24 form the signal peptide; sequence MMMNKNVLSSILFFMLIGSVLVES. Residues 50–84 are disordered; it reads KDSGPSPGEGHKVVDRKDTFRFVKHSGPSPSGPGH. Residues 58 to 70 show a composition bias toward basic and acidic residues; sequence EGHKVVDRKDTFR. 4-hydroxyproline is present on residues Pro-77 and Pro-79.

Contains 4-hydroxyproline; hydroxylated on Pro-77 and Pro-79.

The protein localises to the secreted. Its subcellular location is the extracellular space. It is found in the apoplast. Functionally, endogenous secreted peptide that acts as elicitor of immune response and positive regulator of defense response. Amplifies the immune response triggered by flg22, the active epitope of bacterial flagellin. Acts as a negative regulator of root growth. This chain is PAMP-induced secreted peptide 2, found in Arabidopsis thaliana (Mouse-ear cress).